The following is an 862-amino-acid chain: Cadherin-related family member 5 (862 aa).

An N-terminal signal peptide occupies residues 1 to 28 (MGAPALLWPPLLLPLLTVLFGHLPGTLA). The Extracellular portion of the chain corresponds to 29 to 671 (QAQVCSANQT…GQRFSTVDMA (643 aa)). Asn-36, Asn-45, Asn-135, Asn-173, Asn-201, Asn-311, Asn-408, Asn-438, and Asn-479 each carry an N-linked (GlcNAc...) asparagine glycan. 4 consecutive Cadherin domains span residues 40 to 127 (FTMN…APEF), 128 to 240 (PFTI…TPWF), 252 to 357 (IQAQ…PLQF), and 358 to 462 (SQSL…PPST). The tract at residues 452–658 (IQVSEREPPS…TTGPISGVGE (207 aa)) is disordered. The span at 461–500 (STESPTPPEAGGTTGPSSNTTLETPSTSGTSQGPATTSSG) shows a compositional bias: low complexity. Residues 529–652 (LGISTSPQTA…GTSQPTTTGP (124 aa)) show a composition bias toward polar residues. 3 consecutive repeat copies span residues 545-575 (TQTPKPGTSQPMVPTPGASTSSQPATPSGSS), 576-606 (TQTPKPGTSQPMVPTPGASTSSQPATPSGSS), and 607-636 (TQTPRPGTSQPMVPTPGASTSSQPATPSGS). The segment at 545-648 (TQTPKPGTSQ…TPKPGTSQPT (104 aa)) is 4 X 31 AA approximate tandem repeats. The 4; truncated repeat unit spans residues 637-648 (TQTPKPGTSQPT). A helical membrane pass occupies residues 672-692 (VLGGVLGALLLLALIFLIILI). Residues 693-862 (HKHYRHRFTC…LGAVADNTYV (170 aa)) lie on the Cytoplasmic side of the membrane. The segment at 693–862 (HKHYRHRFTC…LGAVADNTYV (170 aa)) is mediates interaction with USH1C and MYO7B and is required for proper localization to microvilli tips and function in microvilli organization. Disordered stretches follow at residues 706–803 (KAKE…EGGY) and 821–862 (LNEP…NTYV). Phosphoserine occurs at positions 729, 751, and 755. Over residues 739–768 (GPEPVQPPLRPPSPMSSSPTPPSSMPPSPQ) the composition is skewed to pro residues. At Thr-758 the chain carries Phosphothreonine. A phosphoserine mark is found at Ser-766 and Ser-783. A compositionally biased stretch (basic and acidic residues) spans 791 to 801 (LTKERRPEGEG). Thr-825 carries the post-translational modification Phosphothreonine. Residues 827–837 (DVDSASASGSE) are compositionally biased toward low complexity. Ser-832, Ser-834, and Ser-836 each carry phosphoserine.

Part of the IMAC/intermicrovillar adhesion complex/intermicrovillar tip-link complex composed of ANKS4B, MYO7B, USH1C, CDHR2 and CDHR5. Interacts (via cytoplasmic domain) with USH1C and MYO7B; required for proper localization of CDHR5 to microvilli tips and its function in brush border differentiation. N- and O-glycosylated. As to expression, expressed predominantly in kidney. Also detected in lung and small intestine.

It is found in the apical cell membrane. The protein resides in the cell projection. The protein localises to the microvillus membrane. Intermicrovillar adhesion molecule that forms, via its extracellular domain, calcium-dependent heterophilic complexes with CDHR2 on adjacent microvilli. Thereby, controls the packing of microvilli at the apical membrane of epithelial cells. Through its cytoplasmic domain, interacts with microvillus cytoplasmic proteins to form the intermicrovillar adhesion complex/IMAC. This complex plays a central role in microvilli and epithelial brush border differentiation. This Rattus norvegicus (Rat) protein is Cadherin-related family member 5.